Reading from the N-terminus, the 474-residue chain is MKIIHTAIEFAPVIKAGGLGDALYGLAKALAANHTTEVVIPLYPKLFTLPKEQDLCSIQKLSYFFAGEQEATAFSYFYEGIKVTLFKLDTQPELFENAETIYTSDDAFRFCAFSAAAASYIQKEGANIVHLHDWHTGLVAGLLKQQPCSQLQKIVLTLHNFGYRGYTTREILEASSLNEFYISQYQLFRDPQTCVLLKGALYCSDFVTTVSPTYAKEILEDYSDYEIHDAITARQHHLRGILNGIDTTIWGPETDPNLAKNYTKELFETPSIFFEAKAKNKKALYEILGLSLEHSPCVCIISRIAEQKGPHFMKQAILHALENAYTLIIIGTCYGNQLHEEFANLQESLANSPNVRILLTYSDVLARQIFAAADMICIPSMFEPCGLTQMIGMRYGTVPLVRATGGLADTVANGINGFSFFNPHDFYEFRNMLSEAVTTYRTNHDKWQHIVRACLDFSSDLETAANKYLEIYKQ.

Lys15 provides a ligand contact to ADP-alpha-D-glucose.

The protein belongs to the glycosyltransferase 1 family. Bacterial/plant glycogen synthase subfamily.

It catalyses the reaction [(1-&gt;4)-alpha-D-glucosyl](n) + ADP-alpha-D-glucose = [(1-&gt;4)-alpha-D-glucosyl](n+1) + ADP + H(+). It participates in glycan biosynthesis; glycogen biosynthesis. Functionally, synthesizes alpha-1,4-glucan chains using ADP-glucose. In Chlamydia trachomatis serovar A (strain ATCC VR-571B / DSM 19440 / HAR-13), this protein is Glycogen synthase.